Here is a 225-residue protein sequence, read N- to C-terminus: Imidazole glycerol phosphate synthase subunit HisH (225 aa).

The Glutamine amidotransferase type-1 domain maps to 3–225; that stretch reads TIAIVDYGMG…LYRNFVDWQP (223 aa). C82 acts as the Nucleophile in catalysis. Residues H205 and E207 contribute to the active site.

Heterodimer of HisH and HisF.

The protein resides in the cytoplasm. It carries out the reaction 5-[(5-phospho-1-deoxy-D-ribulos-1-ylimino)methylamino]-1-(5-phospho-beta-D-ribosyl)imidazole-4-carboxamide + L-glutamine = D-erythro-1-(imidazol-4-yl)glycerol 3-phosphate + 5-amino-1-(5-phospho-beta-D-ribosyl)imidazole-4-carboxamide + L-glutamate + H(+). It catalyses the reaction L-glutamine + H2O = L-glutamate + NH4(+). Its pathway is amino-acid biosynthesis; L-histidine biosynthesis; L-histidine from 5-phospho-alpha-D-ribose 1-diphosphate: step 5/9. In terms of biological role, IGPS catalyzes the conversion of PRFAR and glutamine to IGP, AICAR and glutamate. The HisH subunit catalyzes the hydrolysis of glutamine to glutamate and ammonia as part of the synthesis of IGP and AICAR. The resulting ammonia molecule is channeled to the active site of HisF. The protein is Imidazole glycerol phosphate synthase subunit HisH of Bordetella pertussis (strain Tohama I / ATCC BAA-589 / NCTC 13251).